The primary structure comprises 474 residues: E3 ubiquitin-protein ligase RNF14 (474 aa).

The RWD domain occupies 11 to 137; the sequence is DELLALASIY…QFLKEETLAY (127 aa). The short motif at 37-45 is the D-box element; sequence RIYLDLPQN. The tract at residues 216 to 457 is TRIAD supradomain; sequence KLFLCSICFC…DPGSPCFNRL (242 aa). Zn(2+)-binding residues include cysteine 220, cysteine 223, cysteine 238, histidine 240, cysteine 243, cysteine 246, cysteine 265, cysteine 270, cysteine 309, cysteine 314, cysteine 329, cysteine 332, cysteine 337, cysteine 340, and histidine 345. The RING-type 1 zinc-finger motif lies at 220–270; it reads CSICFCEKLGSECMYFLECRHVYCKACLKDYFEIQIRDGQVQCLNCPEPKC. The segment at 289–350 adopts an IBR-type zinc-finger fold; it reads ARYDRLLLQS…RLTYHGVSPC (62 aa). Serine 348 carries the post-translational modification Phosphoserine. Cysteine 350 contributes to the Zn(2+) binding site. Positions 351-395 form a coiled coil; that stretch reads KVTAEKLMDLRNEYLQADEANKRLLDQRYGKRVIQKALEEMESKE. The interval 361 to 474 is interaction with androgen receptor; it reads RNEYLQADEA…DDIWEDEVED (114 aa). Residues cysteine 404 and cysteine 407 each contribute to the Zn(2+) site. An RING-type 2; atypical zinc finger spans residues 404-433; the sequence is CPCCGTPIEKLDGCNKMTCTGCMQYFCWIC. Residue cysteine 417 is part of the active site. Zn(2+) is bound by residues cysteine 422, cysteine 425, cysteine 430, cysteine 433, histidine 445, and cysteine 453.

Belongs to the RBR family. RNF14 subfamily. Interacts with GCN1; interaction takes place in response to ribosome collisions and is required for ubiquitination of EEF1A1/eEF1A. Interacts with the ubiquitin-conjugating enzymes UBE2E1 and UBE2E2. Interacts with AR/androgen receptor. Interacts with TCF7/TCF1, TCF7L1/TCF3 and TCF7L2/TCF4; promoting Wnt signaling. In terms of processing, RING-type zinc finger-dependent and UBE2E2-dependent autoubiquitination. Widely expressed.

Its subcellular location is the cytoplasm. It localises to the nucleus. The catalysed reaction is [E2 ubiquitin-conjugating enzyme]-S-ubiquitinyl-L-cysteine + [acceptor protein]-L-lysine = [E2 ubiquitin-conjugating enzyme]-L-cysteine + [acceptor protein]-N(6)-ubiquitinyl-L-lysine.. Its pathway is protein modification; protein ubiquitination. E3 ubiquitin-protein ligase that plays a key role in the RNF14-RNF25 translation quality control pathway, a pathway that takes place when a ribosome has stalled during translation, and which promotes ubiquitination and degradation of translation factors on stalled ribosomes. Recruited to stalled ribosomes by the ribosome collision sensor GCN1 and mediates 'Lys-6'-linked ubiquitination of target proteins, leading to their degradation. Mediates ubiquitination of EEF1A1/eEF1A and ETF1/eRF1 translation factors on stalled ribosomes, leading to their degradation. Also catalyzes ubiquitination of ribosomal proteins RPL0, RPL1, RPL12, RPS13 and RPS17. Specifically required to resolve RNA-protein cross-links caused by reactive aldehydes, which trigger translation stress by stalling ribosomes: acts by catalying 'Lys-6'-linked ubiquitination of RNA-protein cross-links, leading to their removal by the ATP-dependent unfoldase VCP and subsequent degradation by the proteasome. Independently of its function in the response to stalled ribosomes, acts as a regulator of transcription in Wnt signaling via its interaction with TCF transcription factors (TCF7/TCF1, TCF7L1/TCF3 and TCF7L2/TCF4). May also play a role as a coactivator for androgen- and, to a lesser extent, progesterone-dependent transcription. The sequence is that of E3 ubiquitin-protein ligase RNF14 from Homo sapiens (Human).